We begin with the raw amino-acid sequence, 317 residues long: Terpene synthase 3 (317 aa).

The DDxx(x)D/E motif motif lies at 96-101 (DDFYFE). The NDxxSxxxD/E motif signature appears at 223 to 231 (NDMVSFERE).

Belongs to the terpene synthase family.

In terms of biological role, terpene synthase that converts its substrate farnesyl diphosphate (FPP) into the sesquiterpene CAS 137235-51-9 as a major product. Is also able to convert FPP into 9-epi-(E)-caryophyllene, alpha-neoclovene, beta-neoclovene, and 3 yet unidentified sesquiterpenes. This Dictyostelium purpureum (Slime mold) protein is Terpene synthase 3.